The chain runs to 366 residues: UDP-N-acetylglucosamine--N-acetylmuramyl-(pentapeptide) pyrophosphoryl-undecaprenol N-acetylglucosamine transferase (366 aa).

UDP-N-acetyl-alpha-D-glucosamine is bound by residues 15–17 (TGG), Asn-127, Arg-175, Ser-201, Ile-255, and Gln-300.

It belongs to the glycosyltransferase 28 family. MurG subfamily.

The protein localises to the cell inner membrane. It carries out the reaction di-trans,octa-cis-undecaprenyl diphospho-N-acetyl-alpha-D-muramoyl-L-alanyl-D-glutamyl-meso-2,6-diaminopimeloyl-D-alanyl-D-alanine + UDP-N-acetyl-alpha-D-glucosamine = di-trans,octa-cis-undecaprenyl diphospho-[N-acetyl-alpha-D-glucosaminyl-(1-&gt;4)]-N-acetyl-alpha-D-muramoyl-L-alanyl-D-glutamyl-meso-2,6-diaminopimeloyl-D-alanyl-D-alanine + UDP + H(+). Its pathway is cell wall biogenesis; peptidoglycan biosynthesis. In terms of biological role, cell wall formation. Catalyzes the transfer of a GlcNAc subunit on undecaprenyl-pyrophosphoryl-MurNAc-pentapeptide (lipid intermediate I) to form undecaprenyl-pyrophosphoryl-MurNAc-(pentapeptide)GlcNAc (lipid intermediate II). The protein is UDP-N-acetylglucosamine--N-acetylmuramyl-(pentapeptide) pyrophosphoryl-undecaprenol N-acetylglucosamine transferase of Thiobacillus denitrificans (strain ATCC 25259 / T1).